The primary structure comprises 257 residues: Nopaline permease ATP-binding protein P (257 aa).

An ABC transporter domain is found at 8–253 (LVAEDVHKNF…PTSPRCRAFL (246 aa)). Position 40-47 (40-47 (GSSGSGKS)) interacts with ATP.

The protein belongs to the ABC transporter superfamily.

The protein resides in the cell inner membrane. Functionally, component of the nopaline active transport system probably consisting of four subunits: Q, M, P and T. This system is also capable of transporting octopine provided that catabolic functions are induced with nopaline. The sequence is that of Nopaline permease ATP-binding protein P (nocP) from Agrobacterium fabrum (strain C58 / ATCC 33970) (Agrobacterium tumefaciens (strain C58)).